Consider the following 104-residue polypeptide: Integration host factor subunit alpha (104 aa).

It belongs to the bacterial histone-like protein family. In terms of assembly, heterodimer of an alpha and a beta chain.

Its function is as follows. This protein is one of the two subunits of integration host factor, a specific DNA-binding protein that functions in genetic recombination as well as in transcriptional and translational control. The polypeptide is Integration host factor subunit alpha (Bartonella quintana (strain Toulouse) (Rochalimaea quintana)).